Here is a 172-residue protein sequence, read N- to C-terminus: Macro domain-containing protein lp_3408 (172 aa).

The Macro domain occupies 1–171; that stretch reads MVEIKVIHGD…VFSTALAALT (171 aa).

This sequence belongs to the MacroD-type family.

This chain is Macro domain-containing protein lp_3408, found in Lactiplantibacillus plantarum (strain ATCC BAA-793 / NCIMB 8826 / WCFS1) (Lactobacillus plantarum).